Here is a 243-residue protein sequence, read N- to C-terminus: DNA repair protein RecO (243 aa).

Belongs to the RecO family.

In terms of biological role, involved in DNA repair and RecF pathway recombination. The polypeptide is DNA repair protein RecO (Vibrio vulnificus (strain CMCP6)).